The following is a 378-amino-acid chain: Odorant receptor Or2 (378 aa).

Residue methionine 1 is a topological domain, cytoplasmic. A helical membrane pass occupies residues 2-22; the sequence is LIEECPIIGVNVRVWLFWSYL. Over 23–29 the chain is Extracellular; sequence RRPRLSR. A helical transmembrane segment spans residues 30 to 50; that stretch reads FLVGCIPVAVLNVFQFLKLYS. Residues 51 to 59 are Cytoplasmic-facing; sequence SWGDMSELI. A helical membrane pass occupies residues 60-80; sequence INGYFTVLYFNLVLRTSFLVI. Over 81 to 120 the chain is Extracellular; sequence NRRKFETFFEGVAAEYALLEKNDDIRPVLERYTRRGRMLS. Residues 121–141 traverse the membrane as a helical segment; that stretch reads ISNLWLGAFISACFVTYPLFV. Over 142–164 the chain is Cytoplasmic; that stretch reads PGRGLPYGVTIPGVDVLATPTYQ. A helical membrane pass occupies residues 165-185; it reads VVFVLQVYLTFPACCMYIPFT. At 186–254 the chain is on the extracellular side; that stretch reads SFYATCTLFA…HDLNSLVTHL (69 aa). A helical transmembrane segment spans residues 255–275; it reads CLLEFLSFGMMLCALLFLLSI. The Cytoplasmic segment spans residues 276–278; it reads SNQ. The chain crosses the membrane as a helical span at residues 279-299; the sequence is LAQMIMIGSYIFMILSQMFAF. Residues 300-378 are Extracellular-facing; that stretch reads YWHANEVLEQ…YFTLLRRVYN (79 aa). N-linked (GlcNAc...) asparagine glycosylation is present at asparagine 364.

The protein belongs to the insect chemoreceptor superfamily. Heteromeric odorant receptor channel (TC 1.A.69) family. Or30a subfamily. Expressed in male and female antennae and maxillary palps.

It localises to the cell membrane. In terms of biological role, odorant receptor which plays a critical role in the anthropophilic host-seeking behavior; establishes the host preference to transmit malaria. The protein is Odorant receptor Or2 (OR2) of Anopheles gambiae (African malaria mosquito).